Here is a 92-residue protein sequence, read N- to C-terminus: Signal recognition particle 19 kDa protein (92 aa).

It belongs to the SRP19 family. In terms of assembly, part of the signal recognition particle protein translocation system, which is composed of SRP and FtsY. Archaeal SRP consists of a 7S RNA molecule of 300 nucleotides and two protein subunits: SRP54 and SRP19.

It is found in the cytoplasm. Functionally, involved in targeting and insertion of nascent membrane proteins into the cytoplasmic membrane. Binds directly to 7S RNA and mediates binding of the 54 kDa subunit of the SRP. The sequence is that of Signal recognition particle 19 kDa protein from Haloarcula marismortui (strain ATCC 43049 / DSM 3752 / JCM 8966 / VKM B-1809) (Halobacterium marismortui).